The following is a 478-amino-acid chain: UDP-N-acetylmuramate--L-alanine ligase (478 aa).

Position 112 to 118 (112 to 118 (GTHGKTT)) interacts with ATP.

It belongs to the MurCDEF family.

Its subcellular location is the cytoplasm. The catalysed reaction is UDP-N-acetyl-alpha-D-muramate + L-alanine + ATP = UDP-N-acetyl-alpha-D-muramoyl-L-alanine + ADP + phosphate + H(+). It participates in cell wall biogenesis; peptidoglycan biosynthesis. Its function is as follows. Cell wall formation. In Polaromonas naphthalenivorans (strain CJ2), this protein is UDP-N-acetylmuramate--L-alanine ligase.